Consider the following 561-residue polypeptide: Guanine nucleotide-binding protein-like 3 (561 aa).

A compositionally biased stretch (basic residues) spans 28–46; it reads HNRKLKKAAKKQGISRKAK. Disordered stretches follow at residues 28 to 58 and 76 to 110; these read HNRK…APFK and KEQN…KKAK. Residues 53-98 are a coiled coil; it reads NSAPFKEEVLREAEQRKQELETLKEQNKIVKQQEKAAKRKKEKDAA. Basic and acidic residues predominate over residues 76 to 88; it reads KEQNKIVKQQEKA. Residues 133 to 319 enclose the CP-type G domain; the sequence is CQELNKVIEA…MIDSPGILAA (187 aa). GTP-binding positions include 181–184, 268–275, and 312–315; these read NKID, GFPNVGKS, and DSPG. Positions 486–532 are disordered; that stretch reads ATTTDAEEEKMDTTTNTDEPEAESHISSTVEPIQEPTEKRKDKPAKE. The segment covering 521-532 has biased composition (basic and acidic residues); it reads PTEKRKDKPAKE.

The protein belongs to the TRAFAC class YlqF/YawG GTPase family.

The protein resides in the nucleus. The protein localises to the nucleolus. Functionally, may play a role in regulating cellular proliferation. This chain is Guanine nucleotide-binding protein-like 3 (gnl3), found in Danio rerio (Zebrafish).